The chain runs to 238 residues: Sugar fermentation stimulation protein homolog (238 aa).

This sequence belongs to the SfsA family.

This is Sugar fermentation stimulation protein homolog from Vibrio parahaemolyticus serotype O3:K6 (strain RIMD 2210633).